Here is a 264-residue protein sequence, read N- to C-terminus: Wtf element wtf11 (264 aa).

The segment covering 1–12 (MNSNYVPLTSSV) has biased composition (polar residues). The tract at residues 1 to 26 (MNSNYVPLTSSVDVEEKMESENGVDL) is disordered. 4 helical membrane-spanning segments follow: residues 107–127 (LLFV…VIFG), 145–165 (LSWF…YDFW), 180–200 (WKNT…GFFV), and 217–237 (SLFA…FETL).

The protein belongs to the WTF family.

The protein localises to the membrane. In terms of biological role, may act in meiotic drive. This Schizosaccharomyces pombe (strain 972 / ATCC 24843) (Fission yeast) protein is Wtf element wtf11.